A 953-amino-acid polypeptide reads, in one-letter code: Atromentin synthetase invA2 (953 aa).

Residues Arg38–Val460 form an adenylation (A) domain region. Positions Ala592–Ile670 constitute a Carrier domain. Positions Thr597–Asp667 are thiolation and peptide carrier (T) domain. An O-(pantetheine 4'-phosphoryl)serine modification is found at Ser629. The thioesterase (TE) domain stretch occupies residues Pro693–His795.

The protein belongs to the ATP-dependent AMP-binding enzyme family.

The protein operates within secondary metabolite biosynthesis. Its function is as follows. An L-tyrosine:2-oxoglutarate aminotransferase (probably invD) and atromentin synthetase invA2 catalyze consecutive steps to turn over L-tyrosine into atromentin, which represents the generic precursor molecule for the entire terphenylquinone and pulvinic acid family of pigments, which are widely distributed secondary metabolites in homobasidiomycetes. The first step catalyzed by the aminotransferase converts L-tyrosine in to 4-hydroxyphenylpyruvate (4-HPP). Adenylation of two 4-HPP monomers by the invA2 adenylation (A) domain, covalent tethering of the monomers as a thioester and oxoester onto the invA2 thiolation (T) and thioesterase (TE) domains, respectively, and symmetric C-C-bond formation between two monomers catalyzed by the invA2 TE domain leads to atromentin. This Paxillus involutus (Naked brimcap) protein is Atromentin synthetase invA2 (invA2).